The primary structure comprises 975 residues: Importin-11 (975 aa).

Met1 is modified (N-acetylmethionine). The Importin N-terminal domain maps to 28-100; that stretch reads AEEQLKQWET…RAGLITNFNE (73 aa). HEAT repeat units follow at residues 123–160, 283–317, 318–356, 422–459, 473–509, 511–548, 555–593, 600–636, 640–677, 683–720, 731–773, 819–849, 850–887, and 957–974; these read RQWP…TLAS, QHPI…ERFI, VQCM…KMAF, QTLT…AVGL, WFKT…VKFK, DLRP…DFEF, PYLE…RVNV, GCLV…GLGA, NLYP…TLEN, PELL…SSTE, QSFY…ILPC, QEMD…KLSA, LALL…EDPE, and METV…FLQG. A Phosphoserine modification is found at Ser343.

It belongs to the importin beta family. Interacts with UBE2E3 and RPL12.

It localises to the cytoplasm. The protein localises to the nucleus. Functions in nuclear protein import as nuclear transport receptor. Serves as receptor for nuclear localization signals (NLS) in cargo substrates. Is thought to mediate docking of the importin/substrate complex to the nuclear pore complex (NPC) through binding to nucleoporin and the complex is subsequently translocated through the pore by an energy requiring, Ran-dependent mechanism. At the nucleoplasmic side of the NPC, Ran binds to the importin, the importin/substrate complex dissociates and importin is re-exported from the nucleus to the cytoplasm where GTP hydrolysis releases Ran. The directionality of nuclear import is thought to be conferred by an asymmetric distribution of the GTP- and GDP-bound forms of Ran between the cytoplasm and nucleus. Mediates the nuclear import of RPL12, and of UBE2E3. The chain is Importin-11 (Ipo11) from Mus musculus (Mouse).